The primary structure comprises 1129 residues: ISWI chromatin-remodeling complex ATPase ISW1 (1129 aa).

Residues 144–177 form a disordered region; it reads KANGKGKGKHQDVRRRKTEHEEDAELLKEEDSDD. The segment covering 147–160 has biased composition (basic residues); that stretch reads GKGKGKHQDVRRRK. The segment covering 164–177 has biased composition (acidic residues); that stretch reads EEDAELLKEEDSDD. A Helicase ATP-binding domain is found at 208–373; sequence VSLHKNKIAG…WALLNFLLPD (166 aa). 221–228 lines the ATP pocket; it reads DEMGLGKT. The short motif at 324-327 is the DEAH box element; it reads DEAH. Residues 506-657 form the Helicase C-terminal domain; the sequence is VLDKLLKKLK…QLVIQQNRTS (152 aa). The tract at residues 683 to 705 is disordered; it reads FKSGTSTGSAGTPEPGSGEKGDD. Position 694 is a phosphothreonine (Thr694). Ser846 is subject to Phosphoserine. SANT domains follow at residues 882–935 and 988–1052; these read EGFT…SNIE and NKRT…LLQC. A compositionally biased stretch (basic and acidic residues) spans 1073–1108; it reads KEDENGKRIREEFADQTANEKENVDGVESKKAKIED. Residues 1073–1129 form a disordered region; that stretch reads KEDENGKRIREEFADQTANEKENVDGVESKKAKIEDTSNVGTEQLVAEKIPENETTH.

It belongs to the SNF2/RAD54 helicase family. ISWI subfamily. In terms of assembly, component of the ISW1A complex, which at least consists of ISW1 and IOC3. Component of the ISW1B complex, which at least consists of ISW1, IOC2 and IOC4.

The protein resides in the nucleus. Functionally, catalytic component of ISW1-type complexes, which act by remodeling the chromatin by catalyzing an ATP-dependent alteration in the structure of nucleosomal DNA. They are involved in coordinating transcriptional repression, activation and elongation phases. The ISW1A complex represses gene expression at initiation through specific positioning of a promoter proximal dinucleosome. The ISW1B complex acts within coding regions to control the amount of RNA polymerase II released into productive elongation and to coordinate elongation with termination and pre-mRNA processing. This Saccharomyces cerevisiae (strain ATCC 204508 / S288c) (Baker's yeast) protein is ISWI chromatin-remodeling complex ATPase ISW1 (ISW1).